We begin with the raw amino-acid sequence, 59 residues long: Pycsar effector protein MePycTM (59 aa).

Residues 36 to 56 (VAVAIYLLGAAMLSSGAAVLA) form a helical membrane-spanning segment.

The protein resides in the cell membrane. Functionally, pycsar (pyrimidine cyclase system for antiphage resistance) provides immunity against bacteriophage. The pyrimidine cyclase (PycC) synthesizes cyclic nucleotides in response to infection; these serve as specific second messenger signals. The signals activate the adjacent effector, leading to bacterial cell death and abortive phage infection. A clade D Pycsar system. The effector gene of a two-gene Pycsar system. Expression of this and adjacent uridylate cyclase MePycC (AC A0A1C5G2V9) probably confers resistance to bacteriophage. The genes are probably only expressed in response to bacteriophage infection. Probably only responds to cUMP (produced by its cognate NTP cyclase), acts by impairing membrane integrity. In Micromonospora echinofusca, this protein is Pycsar effector protein MePycTM.